The following is a 397-amino-acid chain: Dual-specificity RNA methyltransferase RlmN (397 aa).

Glu130 (proton acceptor) is an active-site residue. One can recognise a Radical SAM core domain in the interval 138–377 (VEDRGAVCIS…ASPIRTPRGR (240 aa)). An intrachain disulfide couples Cys145 to Cys383. The [4Fe-4S] cluster site is built by Cys152, Cys156, and Cys159. Residues 209 to 210 (GE), Ser241, 263 to 265 (SLH), and Asn340 each bind S-adenosyl-L-methionine. Cys383 (S-methylcysteine intermediate) is an active-site residue.

The protein belongs to the radical SAM superfamily. RlmN family. Requires [4Fe-4S] cluster as cofactor.

Its subcellular location is the cytoplasm. The enzyme catalyses adenosine(2503) in 23S rRNA + 2 reduced [2Fe-2S]-[ferredoxin] + 2 S-adenosyl-L-methionine = 2-methyladenosine(2503) in 23S rRNA + 5'-deoxyadenosine + L-methionine + 2 oxidized [2Fe-2S]-[ferredoxin] + S-adenosyl-L-homocysteine. It carries out the reaction adenosine(37) in tRNA + 2 reduced [2Fe-2S]-[ferredoxin] + 2 S-adenosyl-L-methionine = 2-methyladenosine(37) in tRNA + 5'-deoxyadenosine + L-methionine + 2 oxidized [2Fe-2S]-[ferredoxin] + S-adenosyl-L-homocysteine. Its function is as follows. Specifically methylates position 2 of adenine 2503 in 23S rRNA and position 2 of adenine 37 in tRNAs. m2A2503 modification seems to play a crucial role in the proofreading step occurring at the peptidyl transferase center and thus would serve to optimize ribosomal fidelity. In Granulibacter bethesdensis (strain ATCC BAA-1260 / CGDNIH1), this protein is Dual-specificity RNA methyltransferase RlmN.